Consider the following 445-residue polypeptide: Methionine aminopeptidase 2 (445 aa).

The segment at 1 to 76 (MAAQVASGVG…KKKCTSKVQT (76 aa)) is disordered. Positions 57–71 (AKKKKKKTKKKKKCT) are enriched in basic residues. Residue His-195 coordinates substrate. Residues Asp-215, Asp-226, and His-295 each contribute to the a divalent metal cation site. His-303 is a binding site for substrate. Glu-331 and Glu-426 together coordinate a divalent metal cation.

This sequence belongs to the peptidase M24A family. Methionine aminopeptidase eukaryotic type 2 subfamily. It depends on Co(2+) as a cofactor. The cofactor is Zn(2+). Mn(2+) is required as a cofactor. Requires Fe(2+) as cofactor.

It localises to the cytoplasm. The catalysed reaction is Release of N-terminal amino acids, preferentially methionine, from peptides and arylamides.. Functionally, cotranslationally removes the N-terminal methionine from nascent proteins. The N-terminal methionine is often cleaved when the second residue in the primary sequence is small and uncharged (Met-Ala-, Cys, Gly, Pro, Ser, Thr, or Val). This is Methionine aminopeptidase 2 from Paracoccidioides lutzii (strain ATCC MYA-826 / Pb01) (Paracoccidioides brasiliensis).